The sequence spans 440 residues: Suppressor of cytokine signaling 4 (440 aa).

Positions 1–11 (MAENSESNSKN) are enriched in polar residues. The interval 1–29 (MAENSESNSKNVDVRPKTSRSRSADRKDG) is disordered. Positions 12-29 (VDVRPKTSRSRSADRKDG) are enriched in basic and acidic residues. The SH2 domain occupies 286-381 (CYWGVMDKYA…FFEPLLSTPL (96 aa)). The region spanning 376–425 (LLSTPLIRTFPFSLQHICRTVICNCTTYDGIDALPIPSSMKLYLKEYHYK) is the SOCS box domain.

It functions in the pathway protein modification; protein ubiquitination. Its function is as follows. SOCS family proteins form part of a classical negative feedback system that regulates cytokine signal transduction. Substrate-recognition component of a SCF-like ECS (Elongin BC-CUL2/5-SOCS-box protein) E3 ubiquitin-protein ligase complex which mediates the ubiquitination and subsequent proteasomal degradation of target proteins. Inhibits EGF signaling by mediating the degradation of the Tyr-phosphorylated EGF receptor/EGFR. This Bos taurus (Bovine) protein is Suppressor of cytokine signaling 4 (SOCS4).